The chain runs to 181 residues: 3-hydroxyanthranilate 3,4-dioxygenase (181 aa).

Arg-46 contributes to the O2 binding site. Positions 50, 56, and 95 each coordinate Fe cation. Glu-56 provides a ligand contact to substrate. The substrate site is built by Arg-99 and Glu-109.

This sequence belongs to the 3-HAO family. It depends on Fe(2+) as a cofactor.

The protein localises to the cytoplasm. The enzyme catalyses 3-hydroxyanthranilate + O2 = (2Z,4Z)-2-amino-3-carboxymuconate 6-semialdehyde. It functions in the pathway cofactor biosynthesis; NAD(+) biosynthesis; quinolinate from L-kynurenine: step 3/3. Its function is as follows. Catalyzes the oxidative ring opening of 3-hydroxyanthranilate to 2-amino-3-carboxymuconate semialdehyde, which spontaneously cyclizes to quinolinate. This Mycosarcoma maydis (Corn smut fungus) protein is 3-hydroxyanthranilate 3,4-dioxygenase.